The following is a 159-amino-acid chain: Ribosomal RNA large subunit methyltransferase H (159 aa).

Residues L76, G108, and 127–132 (FSKMTF) contribute to the S-adenosyl-L-methionine site.

Belongs to the RNA methyltransferase RlmH family. Homodimer.

The protein localises to the cytoplasm. It catalyses the reaction pseudouridine(1915) in 23S rRNA + S-adenosyl-L-methionine = N(3)-methylpseudouridine(1915) in 23S rRNA + S-adenosyl-L-homocysteine + H(+). Specifically methylates the pseudouridine at position 1915 (m3Psi1915) in 23S rRNA. The sequence is that of Ribosomal RNA large subunit methyltransferase H from Shouchella clausii (strain KSM-K16) (Alkalihalobacillus clausii).